The sequence spans 705 residues: MGKTFNLTRREDGIAILTMDVPGETMNTLKAEFGPEISEILSEIKRDSSIRGLVLISGKKDSFVAGADISMLDACQTAGDAKALSQQGHVVFNELEALNIPVVAAIHGACLGGGLELALACHQRVCSDDGKTMLGVPEVQLGLLPGGGGTQRLPRLVGITTALDMMLTGKQIRPKQALKMGLVNDVVPQTILLQTAVEMALAGKQIAKPVKKSLVNQLLEGTGFGRNIIFDQAAKQVAKKTQGNYPAPAKIIDCVRQGIAKGMQKGLEVEASHFAELVVSKESEALRSIFFATTEMKKETGAEGATPRKVKKAVILGGGLMGGGIASVTTTKAKIPARVKDINEKGLSNALSYAYKLLDKGVKRRHMTPAARDNLMALMTTTTEYKGVKDADIVVEAVFEDLALKHQMVKDIERECGEHTIFASNTSSLPIGQIAQAASRPENVIGLHYFSPVEKMPLVEVIAHAKTSPETIATTVAFARKQGKTPIVVQDGAGFYVNRILALYMNEAAQLLLEGQSVEHLDKALVKFGFPVGPITLLDEVGIDVGAKISPILEKELGERFKAPAAFDKLLSDDRKGRKNGKGFYQYGAASKKKAVDETVYGVLGIKPGVDKEMSAVAERCVVQMLNEAVRCLDAGIIASPRDGDIGAIFGIGFPPFLGGPFHYIDTLGADNLVKILERYQTQYGDRFEPCQRLKAMAAEKARFF.

The tract at residues 1-188 is enoyl-CoA hydratase; it reads MGKTFNLTRR…KMGLVNDVVP (188 aa). The 3-hydroxyacyl-CoA dehydrogenase stretch occupies residues 308-705; that stretch reads RKVKKAVILG…AMAAEKARFF (398 aa).

In the N-terminal section; belongs to the enoyl-CoA hydratase/isomerase family. It in the central section; belongs to the 3-hydroxyacyl-CoA dehydrogenase family. As to quaternary structure, heterotetramer of two alpha chains (FadJ) and two beta chains (FadI).

It localises to the cytoplasm. The enzyme catalyses a (3S)-3-hydroxyacyl-CoA = a (2E)-enoyl-CoA + H2O. It carries out the reaction a 4-saturated-(3S)-3-hydroxyacyl-CoA = a (3E)-enoyl-CoA + H2O. The catalysed reaction is a (3S)-3-hydroxyacyl-CoA + NAD(+) = a 3-oxoacyl-CoA + NADH + H(+). It catalyses the reaction (3S)-3-hydroxybutanoyl-CoA = (3R)-3-hydroxybutanoyl-CoA. It functions in the pathway lipid metabolism; fatty acid beta-oxidation. Its function is as follows. Catalyzes the formation of a hydroxyacyl-CoA by addition of water on enoyl-CoA. Also exhibits 3-hydroxyacyl-CoA epimerase and 3-hydroxyacyl-CoA dehydrogenase activities. The polypeptide is Fatty acid oxidation complex subunit alpha (Shewanella oneidensis (strain ATCC 700550 / JCM 31522 / CIP 106686 / LMG 19005 / NCIMB 14063 / MR-1)).